A 397-amino-acid chain; its full sequence is Sulfate adenylyltransferase (397 aa).

This sequence belongs to the sulfate adenylyltransferase family.

It carries out the reaction sulfate + ATP + H(+) = adenosine 5'-phosphosulfate + diphosphate. The protein operates within sulfur metabolism; hydrogen sulfide biosynthesis; sulfite from sulfate: step 1/3. This Allochromatium vinosum (strain ATCC 17899 / DSM 180 / NBRC 103801 / NCIMB 10441 / D) (Chromatium vinosum) protein is Sulfate adenylyltransferase (sat).